Here is a 430-residue protein sequence, read N- to C-terminus: MIEMFDFTKEVDIGIFNKIQNRSKLENKEIAKRVEDIIENVRERKDKALFEYTYMYDGINLNSETVKVKEEEIKRAYEEVKEDFLKALDKAIKNITEFHEKQKEKTWMDFKEGIVYGQVLRPLSSVGIYVPGGTASYPSSVLMNGIPAKVAGVERIVMVSPAGKKGISPYVLVAADKIGIKEIYKIGGAQAVAALAFGTESIPKVDKIVGPGNIYVAMAKRALYGYVDIDMVAGPSEILVIADESASPKYVAADLLSQAEHDVMASSILVTTSKELAEKVKKEIERQMEYLERKEIIAESLKNFGAIIVIDNLKEAIGIANEIAPEHLELVIENPFEILGEIKNAGAVFLGEFSPEPLGDYLAGPNHVLPTSGTARFFSPLSVRDFVKKMNVLYYSKEALSSVKDDVITLAEAEELTAHANSVKVRFYND.

The NAD(+) site is built by tyrosine 129, glutamine 190, and asparagine 213. Serine 236, glutamine 258, and histidine 261 together coordinate substrate. Glutamine 258 and histidine 261 together coordinate Zn(2+). Residues glutamate 326 and histidine 327 each act as proton acceptor in the active site. Positions 327, 360, 414, and 419 each coordinate substrate. Aspartate 360 is a Zn(2+) binding site. Histidine 419 lines the Zn(2+) pocket.

Belongs to the histidinol dehydrogenase family. The cofactor is Zn(2+).

It catalyses the reaction L-histidinol + 2 NAD(+) + H2O = L-histidine + 2 NADH + 3 H(+). Its pathway is amino-acid biosynthesis; L-histidine biosynthesis; L-histidine from 5-phospho-alpha-D-ribose 1-diphosphate: step 9/9. Catalyzes the sequential NAD-dependent oxidations of L-histidinol to L-histidinaldehyde and then to L-histidine. In Caldanaerobacter subterraneus subsp. tengcongensis (strain DSM 15242 / JCM 11007 / NBRC 100824 / MB4) (Thermoanaerobacter tengcongensis), this protein is Histidinol dehydrogenase.